A 298-amino-acid polypeptide reads, in one-letter code: Sulfofructose kinase (298 aa).

The 6-deoxy-6-sulfo-D-fructose site is built by Asp-13, Lys-27, Gly-39, Ser-95, and Arg-138. The ATP site is built by Thr-212, Gly-214, Gly-217, and Gly-243. Asp-244 serves as a coordination point for 6-deoxy-6-sulfo-D-fructose.

This sequence belongs to the carbohydrate kinase PfkB family. In terms of assembly, homodimer.

The enzyme catalyses 6-deoxy-6-sulfo-D-fructose + ATP = 6-deoxy-6-sulfo-D-fructose 1-phosphate + ADP + H(+). Strongly inhibited by ADP. Activated by sulfoquinovose (SQ), sulfolactaldehyde (SLA) and dihydroxyacetone phosphate (DHAP) (through effects on KM) and by fructose 6-phosphate (F6P), fructose bisphosphate (FBP), phosphoenolpyruvate (PEP) and citrate (through effects on kcat/KM). Functionally, phosphorylates 6-deoxy-6-sulfo-D-fructose (SF) to 6-deoxy-6-sulfo-D-fructose 1-phosphate (SFP). Cannot phosphorylate fructose 6-phosphate. The sequence is that of Sulfofructose kinase (yihV) from Escherichia coli (strain K12).